The primary structure comprises 522 residues: Putative E3 ubiquitin-protein ligase RING1a (522 aa).

The span at 1–10 (MSVKNNSFSS) shows a compositional bias: polar residues. Residues 1-119 (MSVKNNSFSS…RSPSSISGDQ (119 aa)) are disordered. Positions 32–64 (LQEKDETKEEKEGDEEVKHDEAEEDQEVVKPND) are enriched in basic and acidic residues. Over residues 65-106 (AEEDDDGDDAEEDEEEEVEAEEDEEAEEEEEEEEEEEEEEED) the composition is skewed to acidic residues. Residues 136-176 (CPICLGIIKKTRTVMECLHRFCRECIDKSMRLGNNECPACR) form an RING-type zinc finger. Disordered stretches follow at residues 250 to 347 (VLMR…DTKG) and 363 to 385 (RGGT…KSVR). A compositionally biased stretch (basic and acidic residues) spans 287–306 (NNNRGRDKDSSSDERGTEVR). Positions 316–325 (SRSTQHPSSS) are enriched in low complexity. 2 stretches are compositionally biased toward polar residues: residues 326–336 (GANKNNGNCAD) and 366–384 (TRSN…SKSV).

Homodimer or heterodimer with RING1B. Interacts with CLF. Component of the PRC1-like complex, at least composed of RING1A, RING1B and LHP1.

The protein localises to the nucleus. It catalyses the reaction S-ubiquitinyl-[E2 ubiquitin-conjugating enzyme]-L-cysteine + [acceptor protein]-L-lysine = [E2 ubiquitin-conjugating enzyme]-L-cysteine + N(6)-ubiquitinyl-[acceptor protein]-L-lysine.. The protein operates within protein modification; protein ubiquitination. In terms of biological role, putative E3 ubiquitin-protein ligase that mediates monoubiquitination of 'Lys-119' of histone H2A (H2AK119ub), thereby playing a central role in histone code and gene regulation. As part of the PRC1-like complex, repress class I KNOX gene expression. PcG PRC1 complex maintains the transcriptionally repressive state of many genes, including Hox genes, throughout development. PcG PRC1 complex acts via chromatin remodeling and modification of histones, rendering chromatin heritably changed in its expressibility. The protein is Putative E3 ubiquitin-protein ligase RING1a (RING1A) of Arabidopsis thaliana (Mouse-ear cress).